We begin with the raw amino-acid sequence, 792 residues long: Cis-abienol synthase, chloroplastic (792 aa).

A chloroplast-targeting transit peptide spans 1–37; it reads MVLGLRSKIIPLPDHKLGNIKLGSVTNAICHRPCRVR. Residues Asp-539, Asp-543, Asn-684, and Glu-692 each coordinate Mg(2+). A DDXXD motif motif is present at residues 539–543; that stretch reads DDFFD.

The protein belongs to the terpene synthase family. The cofactor is Mg(2+). Expressed specifically in trichomes.

It is found in the plastid. The protein resides in the chloroplast. It catalyses the reaction 8-hydroxycopalyl diphosphate = cis-abienol + diphosphate. It functions in the pathway secondary metabolite biosynthesis; terpenoid biosynthesis. Its function is as follows. Involved in the biosynthesis of cis-abienol, a labdane diterpene that can be used as synthesis precursor of ambergris substitution fragance products. This Nicotiana tabacum (Common tobacco) protein is Cis-abienol synthase, chloroplastic.